The primary structure comprises 353 residues: Rhodopsin (353 aa).

Over 1–36 the chain is Extracellular; it reads MNGTEGPFFYVPMVNTTGIVRSPYEYPQYYLVNPAA. Asparagine 2 and asparagine 15 each carry an N-linked (GlcNAc...) asparagine glycan. The chain crosses the membrane as a helical span at residues 37-61; it reads YAALGAYMFLLILVGFPINFLTLYV. Residues 62–73 are Cytoplasmic-facing; that stretch reads TIEHKKLRTPLN. A helical transmembrane segment spans residues 74-96; that stretch reads YILLNLAVADLFMVLGGFTTTMY. Topologically, residues 97-110 are extracellular; that stretch reads TSMHGYFVLGRLGC. An intrachain disulfide couples cysteine 110 to cysteine 187. Residues 111–133 traverse the membrane as a helical segment; the sequence is NIEGFFATLGGEIALWSLVVLAI. The short motif at 134–136 is the 'Ionic lock' involved in activated form stabilization element; the sequence is ERW. The Cytoplasmic portion of the chain corresponds to 134-152; that stretch reads ERWVVVCKPISNFRFGENH. The chain crosses the membrane as a helical span at residues 153-173; that stretch reads AIMGLAFTWTMAMACAAPPLV. The Extracellular portion of the chain corresponds to 174–202; sequence GWSRYIPEGMQCSCGIDYYTRAEGFNNES. Asparagine 200 carries N-linked (GlcNAc...) asparagine glycosylation. A helical membrane pass occupies residues 203–224; sequence FVIYMFICHFTIPLTVVFFCYG. Residues 225–252 are Cytoplasmic-facing; that stretch reads RLLCAVKEAAAAQQESETTQRAEKEVTR. The chain crosses the membrane as a helical span at residues 253–274; sequence MVIMMVIAFLVCWLPYASVAWY. Residues 275–286 are Extracellular-facing; the sequence is IFTHQGSEFGPV. A helical membrane pass occupies residues 287-308; the sequence is FMTIPAFFAKSSSIYNPMIYIC. Lysine 296 is modified (N6-(retinylidene)lysine). At 309–353 the chain is on the cytoplasmic side; sequence LNKQFRHCMITTLCCGKNPFEEEEGASTASKTEASSVSSSSVSPA. 2 S-palmitoyl cysteine lipidation sites follow: cysteine 322 and cysteine 323. The disordered stretch occupies residues 331-353; the sequence is EEGASTASKTEASSVSSSSVSPA. The span at 334–353 shows a compositional bias: low complexity; that stretch reads ASTASKTEASSVSSSSVSPA.

It belongs to the G-protein coupled receptor 1 family. Opsin subfamily. Post-translationally, phosphorylated on some or all of the serine and threonine residues present in the C-terminal region. In terms of processing, contains one covalently linked retinal chromophore.

It is found in the membrane. It localises to the cell projection. The protein localises to the cilium. Its subcellular location is the photoreceptor outer segment. Photoreceptor required for image-forming vision at low light intensity. While most salt water fish species use retinal as chromophore, most freshwater fish use 3-dehydroretinal, or a mixture of retinal and 3-dehydroretinal. Light-induced isomerization of 11-cis to all-trans retinal triggers a conformational change that activates signaling via G-proteins. Subsequent receptor phosphorylation mediates displacement of the bound G-protein alpha subunit by arrestin and terminates signaling. The polypeptide is Rhodopsin (rho) (Diplodus annularis (Annular seabream)).